The primary structure comprises 509 residues: Glycogen synthase (509 aa).

Lysine 47 provides a ligand contact to ADP-alpha-D-glucose.

The protein belongs to the glycosyltransferase 1 family. Bacterial/plant glycogen synthase subfamily.

It carries out the reaction [(1-&gt;4)-alpha-D-glucosyl](n) + ADP-alpha-D-glucose = [(1-&gt;4)-alpha-D-glucosyl](n+1) + ADP + H(+). It functions in the pathway glycan biosynthesis; glycogen biosynthesis. Its function is as follows. Synthesizes alpha-1,4-glucan chains using ADP-glucose. In Xanthomonas oryzae pv. oryzae (strain MAFF 311018), this protein is Glycogen synthase.